Consider the following 145-residue polypeptide: uncharacterized protein (145 aa).

The N-terminal stretch at 1-20 is a signal peptide; sequence MPSKVCTLILLFSVINQMKC.

This is an uncharacterized protein from Caenorhabditis elegans.